We begin with the raw amino-acid sequence, 302 residues long: Cell division protein FtsQ (302 aa).

The Cytoplasmic portion of the chain corresponds to 1 to 43 (MRPVDKKPVDRKIERETRYLRRDPAPSRWSYRYQRLMLTPAFR). The helical transmembrane segment at 44 to 64 (AGVRLGTPVIIIALAVAVVFG) threads the bilayer. Residues 65-302 (RADSRDWIMG…SMPGRSAGRG (238 aa)) are Periplasmic-facing. One can recognise a POTRA domain in the interval 89–156 (FMVGSFAITG…GVLQIVIEER (68 aa)).

This sequence belongs to the FtsQ/DivIB family. FtsQ subfamily.

It is found in the cell inner membrane. Its function is as follows. Essential cell division protein. In Ketogulonicigenium vulgare (strain Y25), this protein is Cell division protein FtsQ.